A 706-amino-acid chain; its full sequence is MSCVHNNTSFPVQTEAYLKEVFEKYKELQESKDTSLTARFARALKYYQFLIYTAFSDPKFGIGQGENTRGLLIYHQMGMGKTILSLSLAISLSHIYNPILIAPKSLHSNFQQSLLKLIKLLYPETTDHSKELQKISRRFRFVSLDAYNMGQQIIKAGGSLNGCLLIVDEAHNLFRGIINSANDKTNARQLYNNIMQAKNIRILFLTGTPCSKDPFEMVPCFNMLSGRILLPLHYERFYTAYVNKTTNSPLNADKLLNRLVGMISYAGNQNELNKLFPTELPLIIEKVEMSPEQYRQYLLARDVENAEKHASSGMYEKINAAALCLPGSEQESGSSYYVRSRMISIFASEMLTVKEDEKLSEAVQQLPKEAFTENSSPKIVCMLKNIKTSPGPVLIYSQFVELGLHVVARFLEIEGYQCLQPLKVLEEGHNTILLHKDGKDLMVKNFAEDGPTHTLVLSSKITRFTLITGKILSKERDMIQQLWNSPLNIHGEVIKILLVSKTGAEGLDLKYGRQVHILEPYWDKAREDQVKARIIRIGSHDALPPEEKTVQPFLYIAVANQKMFYSIPEGSQEQKTIDERFHERGLEKSHLNSAFRDLLKRAAIECAFNGESGCLMCQPTNALLFHENFERDLRLPNPCQPLVKAEVKAYSISYEGKQFFYQKNKDVGLGYTFYEYNPIIKAYIEIKPSNPLYIKLIKHVQAGTTA.

One can recognise a Helicase ATP-binding domain in the interval 62–227 (IGQGENTRGL…VPCFNMLSGR (166 aa)). An ATP-binding site is contributed by 75-82 (HQMGMGKT). The DEAH box motif lies at 168-171 (DEAH). The Helicase C-terminal domain maps to 417–599 (QCLQPLKVLE…HLNSAFRDLL (183 aa)).

Belongs to the DEAD box helicase family. DEAH subfamily. As to quaternary structure, part of the viral DNA-directed RNA polymerase that consists of 8 polII-like subunits (RPB1, RPB2, RPB3, RPB5, RPB6, RPB7, RPB9, RPB10), a capping enzyme and a termination factor.

It is found in the virion. Functionally, putative DNA-dependent ATPase required for providing the needed energy to achieve the termination of early transcripts. This chain is Termination factor NPH-I homolog, found in African swine fever virus (isolate Tick/South Africa/Pretoriuskop Pr4/1996) (ASFV).